The chain runs to 682 residues: MSRKQLALFEPTLVVQALKEAVKKLNPQAQWRNPVMFIVWIGSLLTTCISIAMASGAMPGNALFSAAISGWLWITVLFANFAEALAEGRSKAQANSLKGVKKTAFARKLREPKYGAVADKVPADQLRKGDIVLVEAGDIIPCDGEVIEGGASVDESAITGESAPVIRESGGDFASVTGGTRILSDWLVIECSVNPGETFLDRMIAMVEGAQRRKTPNEIALTILLIALTIVFLLATATLWPFSAWGGNAVSVTVLVALLVCLIPTTIGGLLSAIGVAGMSRMLGANVIATSGRAVEAAGDVDVLLLDKTGTITLGNRQASEFIPAQGVDEKTLADAAQLASLADETPEGRSIVILAKQRFNLRERDVQSLHATFVPFTAQSRMSGINIDNRMIRKGSVDAIRRHVEANGGHFPADVDQKVDQVARQGATPLVVVEGSRVLGVIALKDIVKGGIKERFAQLRKMGIKTVMITGDNRLTAAAIAAEAGVDDFLAEATPEAKLALIRQYQAEGRLVAMTGDGTNDAPALAQADVAVAMNSGTQAAKEAGNMVDLDSNPTKLIEVVHIGKQMLMTRGSLTTFSIANDVAKYFAIIPAAFAATYPQLNALNIMRLHSPDSAILSAVIFNALIIVFLIPLALKGVSYKPLTASAMLRRNLWIYGLGGLLVPFIGIKVIDLLLTVCGLV.

Transmembrane regions (helical) follow at residues 34–54, 62–82, 219–239, and 254–274; these read PVMF…IAMA, ALFS…ANFA, IALT…TATL, and VLVA…LSAI. D307 acts as the 4-aspartylphosphate intermediate in catalysis. Residues D344, E348, 377–384, and K395 contribute to the ATP site; that span reads FTAQSRMS. Positions 518 and 522 each coordinate Mg(2+). 3 helical membrane-spanning segments follow: residues 588–608, 616–636, and 656–676; these read FAII…LNIM, AILS…PLAL, and IYGL…DLLL.

It belongs to the cation transport ATPase (P-type) (TC 3.A.3) family. Type IA subfamily. In terms of assembly, the system is composed of three essential subunits: KdpA, KdpB and KdpC.

The protein localises to the cell inner membrane. The enzyme catalyses K(+)(out) + ATP + H2O = K(+)(in) + ADP + phosphate + H(+). Its function is as follows. Part of the high-affinity ATP-driven potassium transport (or Kdp) system, which catalyzes the hydrolysis of ATP coupled with the electrogenic transport of potassium into the cytoplasm. This subunit is responsible for energy coupling to the transport system and for the release of the potassium ions to the cytoplasm. This chain is Potassium-transporting ATPase ATP-binding subunit, found in Escherichia coli O9:H4 (strain HS).